The following is a 90-amino-acid chain: Probable Fe(2+)-trafficking protein (90 aa).

It belongs to the Fe(2+)-trafficking protein family.

In terms of biological role, could be a mediator in iron transactions between iron acquisition and iron-requiring processes, such as synthesis and/or repair of Fe-S clusters in biosynthetic enzymes. This is Probable Fe(2+)-trafficking protein from Vibrio campbellii (strain ATCC BAA-1116).